The sequence spans 301 residues: NADH-cytochrome b5 reductase 3 (301 aa).

Residue G2 is the site of N-myristoyl glycine attachment. One can recognise an FAD-binding FR-type domain in the interval 40-152; sequence DIKYPLRLID…RGPNGLLVYQ (113 aa). K42 is subject to N6-acetyllysine. Y43 carries the post-translational modification Phosphotyrosine. K50 carries the N6-acetyllysine modification. Residues R92, P93, Y94, V109, K111, and F114 each contribute to the FAD site. Position 120 is an N6-acetyllysine (K120). K126, M127, S128, and T185 together coordinate FAD.

This sequence belongs to the flavoprotein pyridine nucleotide cytochrome reductase family. Component of a complex composed of cytochrome b5, NADH-cytochrome b5 reductase (CYB5R3) and MTARC2. Interacts with MTLN; the interaction is required to maintain cellular lipid composition and leads to stimulation of mitochondrial respiratory complex I activity. FAD is required as a cofactor. In terms of processing, myristoylated. As to expression, ubiquitously expressed. In terms of tissue distribution, expressed only in erythroid tissues, reticulocytes and liver.

The protein resides in the endoplasmic reticulum membrane. The protein localises to the mitochondrion outer membrane. It localises to the cytoplasm. It catalyses the reaction 2 Fe(III)-[cytochrome b5] + NADH = 2 Fe(II)-[cytochrome b5] + NAD(+) + H(+). Functionally, catalyzes the reduction of two molecules of cytochrome b5 using NADH as the electron donor. The sequence is that of NADH-cytochrome b5 reductase 3 from Rattus norvegicus (Rat).